The sequence spans 428 residues: Protein CLP1 homolog (428 aa).

ATP contacts are provided by residues Glu-22, Lys-63, and 127 to 132 (DVGKST).

It belongs to the Clp1 family. Clp1 subfamily.

The protein localises to the nucleus. Required for endonucleolytic cleavage during polyadenylation-dependent pre-mRNA 3'-end formation. The polypeptide is Protein CLP1 homolog (Nematostella vectensis (Starlet sea anemone)).